Reading from the N-terminus, the 331-residue chain is MSIATEIIGVPETLDHFQSESFSPYHFFSSEQWAKFRADTPLTLTSDEVKRLRSMGDPIDLDEVRRIYLSLSRLLSAHVESSQLLFEQRNRFLSLSDVTKTPFVIGIAGSVAVGKSTTARILKELLGRWPSSPKVDLITTDGFLHPNAVLQREKLMQRKGFPESYDTAAILRFLSAIKAGRPDVQAPCYSHLVYDVLPDEYKIVDRPDILIFEGINVLQSRDLPADGKIVPMVSDFFDFSIYIDAAEDQIHNWYVTRFMRLRETAFRDPNSYFHRYASISDAEALEIAADLWTNINLKNLRQNILPTRPRADLILKKGKDHLIEQVALRKL.

ATP is bound at residue 109–116 (GSVAVGKS).

It belongs to the prokaryotic pantothenate kinase family.

The protein resides in the cytoplasm. The enzyme catalyses (R)-pantothenate + ATP = (R)-4'-phosphopantothenate + ADP + H(+). Its pathway is cofactor biosynthesis; coenzyme A biosynthesis; CoA from (R)-pantothenate: step 1/5. The protein is Pantothenate kinase of Rhizobium etli (strain CIAT 652).